The primary structure comprises 483 residues: General transcription factor IIH subunit 4 (483 aa).

A disordered region spans residues 93 to 117 (PQQQQSSQQSSSQQQQQQQQQQQQT). The segment covering 94–116 (QQQQSSQQSSSQQQQQQQQQQQQ) has biased composition (low complexity).

The protein belongs to the TFB2 family. As to quaternary structure, component of the 7-subunit TFIIH core complex composed of XPB/repB, XPD/repD, gtf2h1, gtf2h2, gtf2h3, gtf2h4 and gtf2h5, which is active in NER. The core complex associates with the 3-subunit CDK-activating kinase (CAK) module composed of cycH/cyclin H, cdk7 and mnat1 to form the 10-subunit holoenzyme (holo-TFIIH) active in transcription.

It localises to the nucleus. In terms of biological role, component of the general transcription and DNA repair factor IIH (TFIIH) core complex, which is involved in general and transcription-coupled nucleotide excision repair (NER) of damaged DNA and, when complexed to CAK, in RNA transcription by RNA polymerase II. In NER, TFIIH acts by opening DNA around the lesion to allow the excision of the damaged oligonucleotide and its replacement by a new DNA fragment. In transcription, TFIIH has an essential role in transcription initiation. When the pre-initiation complex (PIC) has been established, TFIIH is required for promoter opening and promoter escape. Phosphorylation of the C-terminal tail (CTD) of the largest subunit of RNA polymerase II by the kinase module CAK controls the initiation of transcription. In Dictyostelium discoideum (Social amoeba), this protein is General transcription factor IIH subunit 4 (gtf2h4).